We begin with the raw amino-acid sequence, 123 residues long: Small ribosomal subunit protein uS12 (123 aa).

3-methylthioaspartic acid is present on D89.

Belongs to the universal ribosomal protein uS12 family. As to quaternary structure, part of the 30S ribosomal subunit. Contacts proteins S8 and S17. May interact with IF1 in the 30S initiation complex.

In terms of biological role, with S4 and S5 plays an important role in translational accuracy. Interacts with and stabilizes bases of the 16S rRNA that are involved in tRNA selection in the A site and with the mRNA backbone. Located at the interface of the 30S and 50S subunits, it traverses the body of the 30S subunit contacting proteins on the other side and probably holding the rRNA structure together. The combined cluster of proteins S8, S12 and S17 appears to hold together the shoulder and platform of the 30S subunit. In Rhizobium meliloti (strain 1021) (Ensifer meliloti), this protein is Small ribosomal subunit protein uS12.